A 341-amino-acid polypeptide reads, in one-letter code: Glycerol-1-phosphate dehydrogenase [NAD(P)+] (341 aa).

Residues 81–85 (GKAID) and 103–106 (TTAS) each bind NAD(+). Asp-108 is a substrate binding site. Ser-112 is an NAD(+) binding site. Asp-151 is a binding site for substrate. Zn(2+) contacts are provided by Asp-151 and His-232. His-236 is a binding site for substrate. Zn(2+) is bound at residue His-253.

The protein belongs to the glycerol-1-phosphate dehydrogenase family. The cofactor is Zn(2+).

It is found in the cytoplasm. It catalyses the reaction sn-glycerol 1-phosphate + NAD(+) = dihydroxyacetone phosphate + NADH + H(+). The enzyme catalyses sn-glycerol 1-phosphate + NADP(+) = dihydroxyacetone phosphate + NADPH + H(+). Its pathway is membrane lipid metabolism; glycerophospholipid metabolism. Its function is as follows. Catalyzes the NAD(P)H-dependent reduction of dihydroxyacetonephosphate (DHAP or glycerone phosphate) to glycerol 1-phosphate (G1P). The G1P thus generated is used as the glycerophosphate backbone of phospholipids in the cellular membranes of Archaea. This Methanococcus aeolicus (strain ATCC BAA-1280 / DSM 17508 / OCM 812 / Nankai-3) protein is Glycerol-1-phosphate dehydrogenase [NAD(P)+].